Consider the following 331-residue polypeptide: Inactive serine/threonine-protein kinase BKN1 (331 aa).

Gly-2 is lipidated: N-myristoyl glycine. The S-palmitoyl cysteine moiety is linked to residue Cys-4. A Protein kinase domain is found at 58-328; it reads DYSVRKFYKG…VLDGLNHIAE (271 aa).

It belongs to the protein kinase superfamily. Ser/Thr protein kinase family. In terms of tissue distribution, restricted to stigma in flowers.

Its subcellular location is the cell membrane. The protein localises to the nucleus. Its function is as follows. Collaboratively with BKN2/SZE2, involved in compatible pollen-stigma interactions. This chain is Inactive serine/threonine-protein kinase BKN1, found in Arabidopsis thaliana (Mouse-ear cress).